Reading from the N-terminus, the 354-residue chain is Uroporphyrinogen decarboxylase (354 aa).

Residues 35-39, aspartate 84, tyrosine 159, serine 214, and histidine 333 each bind substrate; that span reads RQAGR.

Belongs to the uroporphyrinogen decarboxylase family. In terms of assembly, homodimer.

The protein localises to the cytoplasm. It catalyses the reaction uroporphyrinogen III + 4 H(+) = coproporphyrinogen III + 4 CO2. The protein operates within porphyrin-containing compound metabolism; protoporphyrin-IX biosynthesis; coproporphyrinogen-III from 5-aminolevulinate: step 4/4. In terms of biological role, catalyzes the decarboxylation of four acetate groups of uroporphyrinogen-III to yield coproporphyrinogen-III. This Nocardia farcinica (strain IFM 10152) protein is Uroporphyrinogen decarboxylase.